The sequence spans 240 residues: MIYSKVFLKLHWGFSVVKPLAAKAKPGFYLPPPTTLIGALSYGKFRGVDNINLGNVYGSPAYNFRNIMATARLESEGVYTEDIIRNVISYFQRKERRENPRYIYGVIPTGKVYIPNGRLVVVYVTDSISKEELEKLCWSITRIGCKECLASVENVEVGEAKKVSGRVKTRYYFRDTVKVVGRKEFLEYVTFWEENGYIWGKEGSPVRYILPITTYPLASKEVEVEAKEAYEVGGEYVVFS.

The protein belongs to the CRISPR-associated protein Cas5 family. Subtype I-A/Apern subfamily. As to quaternary structure, part of the aCascade ribonucleoprotein complex, minimally composed of Csa2 and Cas5a, which binds crRNA. Other possible components of aCascade in strain P1 are Cas6b (SSO1437) and Csa5 (SSO1443), while SSO1399, Cas5b (SSO1400) and SSO1401 have sometimes been seen weakly associated. Csa2 is probably the major RNA-binding subunit. The Csa2-Cas5a-crRNA complex also binds target DNA homologous to crRNA, probably forming an R-loop. Purified aCascade forms a filament about 6 nm in width.

Its function is as follows. CRISPR (clustered regularly interspaced short palindromic repeat) is an adaptive immune system that provides protection against mobile genetic elements (viruses, transposable elements and conjugative plasmids). CRISPR clusters contain spacers, sequences complementary to antecedent mobile elements, and target invading nucleic acids. CRISPR clusters are transcribed and processed into CRISPR RNA (crRNA). In Saccharolobus solfataricus (strain ATCC 35092 / DSM 1617 / JCM 11322 / P2) (Sulfolobus solfataricus), this protein is CRISPR system aCascade subunit Cas5 1 (cas5a).